The following is a 618-amino-acid chain: Carbamoyl phosphate synthase large chain, C-terminal section (618 aa).

The interval Met1–Glu78 is oligomerization domain. Residues Ser79–Glu477 form a carbamoyl phosphate synthetic domain region. The ATP-grasp domain maps to Ser208 to Leu399. ATP contacts are provided by Arg244, Lys283, Leu285, Glu290, Gly315, Val316, His317, Ser318, Gln358, and Glu370. Mg(2+)-binding residues include Gln358, Glu370, and Asn372. Positions 358, 370, and 372 each coordinate Mn(2+). Positions Met476–Phe618 constitute an MGS-like domain. The interval Leu478–Phe618 is allosteric domain.

The protein belongs to the CarB family. As to quaternary structure, composed of two chains; the small (or glutamine) chain promotes the hydrolysis of glutamine to ammonia, which is used by the large (or ammonia) chain to synthesize carbamoyl phosphate. Tetramer of heterodimers (alpha,beta)4. Mg(2+) serves as cofactor. It depends on Mn(2+) as a cofactor.

It carries out the reaction hydrogencarbonate + L-glutamine + 2 ATP + H2O = carbamoyl phosphate + L-glutamate + 2 ADP + phosphate + 2 H(+). It catalyses the reaction hydrogencarbonate + NH4(+) + 2 ATP = carbamoyl phosphate + 2 ADP + phosphate + 2 H(+). Its pathway is amino-acid biosynthesis; L-arginine biosynthesis; carbamoyl phosphate from bicarbonate: step 1/1. It functions in the pathway pyrimidine metabolism; UMP biosynthesis via de novo pathway; (S)-dihydroorotate from bicarbonate: step 1/3. Functionally, large subunit of the glutamine-dependent carbamoyl phosphate synthetase (CPSase). CPSase catalyzes the formation of carbamoyl phosphate from the ammonia moiety of glutamine, carbonate, and phosphate donated by ATP, constituting the first step of 2 biosynthetic pathways, one leading to arginine and/or urea and the other to pyrimidine nucleotides. The large subunit (synthetase) binds the substrates ammonia (free or transferred from glutamine from the small subunit), hydrogencarbonate and ATP and carries out an ATP-coupled ligase reaction, activating hydrogencarbonate by forming carboxy phosphate which reacts with ammonia to form carbamoyl phosphate. The protein is Carbamoyl phosphate synthase large chain, C-terminal section (carB2) of Methanocaldococcus jannaschii (strain ATCC 43067 / DSM 2661 / JAL-1 / JCM 10045 / NBRC 100440) (Methanococcus jannaschii).